A 712-amino-acid polypeptide reads, in one-letter code: Zinc finger and BTB domain-containing protein 39 (712 aa).

The region spanning 30–96 (CDVTIVVGSR…VYTSELFTDL (67 aa)) is the BTB domain. Disordered regions lie at residues 129–162 (ARAK…LRGG), 176–224 (SDAG…IPSM), and 236–260 (GIQT…KNSF). Residues 134–147 (LTSTSESHSGTLSC) show a composition bias toward polar residues. Residue Lys183 forms a Glycyl lysine isopeptide (Lys-Gly) (interchain with G-Cter in SUMO2) linkage. The segment at 372–394 (GNCKVCETHFQDRNSRVTHVLSH) adopts a C2H2-type 1 zinc-finger fold. A C2H2-type 2; atypical zinc finger spans residues 400 to 422 (FSCDMCETKFFTQWQLTLHRRDG). Lys439 is covalently cross-linked (Glycyl lysine isopeptide (Lys-Gly) (interchain with G-Cter in SUMO2)). Residues 480-502 (QACSVCDQRHLNLCSLMWHTLSH) form a C2H2-type 3; atypical zinc finger. C2H2-type zinc fingers lie at residues 508–530 (FSCS…MAVH), 538–560 (FHCR…VSQH), 605–627 (YSCK…RRIH), and 633–655 (YQCK…LKTH). A C2H2-type 8; atypical zinc finger spans residues 661 to 683 (YRCTVCGHYSSTLNLMSKHVGVH).

It belongs to the krueppel C2H2-type zinc-finger protein family.

It localises to the nucleus. Its function is as follows. May be involved in transcriptional regulation. The protein is Zinc finger and BTB domain-containing protein 39 (ZBTB39) of Homo sapiens (Human).